We begin with the raw amino-acid sequence, 214 residues long: Probable nicotinate-nucleotide adenylyltransferase (214 aa).

Belongs to the NadD family.

It carries out the reaction nicotinate beta-D-ribonucleotide + ATP + H(+) = deamido-NAD(+) + diphosphate. It participates in cofactor biosynthesis; NAD(+) biosynthesis; deamido-NAD(+) from nicotinate D-ribonucleotide: step 1/1. Its function is as follows. Catalyzes the reversible adenylation of nicotinate mononucleotide (NaMN) to nicotinic acid adenine dinucleotide (NaAD). The protein is Probable nicotinate-nucleotide adenylyltransferase of Pelodictyon phaeoclathratiforme (strain DSM 5477 / BU-1).